Reading from the N-terminus, the 757-residue chain is Primary amine oxidase (757 aa).

Positions 1 to 30 are cleaved as a signal peptide; sequence MGSPSLYSARKTTLALAVALSFAWQAPVFA. Substrate is bound by residues 411-422 and 493-498; these read YLDSGDYGMGTL and VGNYDY. Catalysis depends on D413, which acts as the Proton acceptor. The active-site Schiff-base intermediate with substrate; via topaquinone is Y496. Y496 is modified (2',4',5'-topaquinone). Cu cation contacts are provided by H554 and H556. Residues D563, L564, D565, E603, Y697, D700, E702, D708, and A709 each coordinate Ca(2+). D563 provides a ligand contact to Mn(2+). D565 contacts Mn(2+). Residues 680-701 form a disordered region; the sequence is PEGKYPNRSTHDTGLGQYSKDN. D708 provides a ligand contact to Mn(2+). Residue H719 coordinates Cu cation.

Belongs to the copper/topaquinone oxidase family. Homodimer. It depends on Cu cation as a cofactor. Zn(2+) is required as a cofactor. Requires Ca(2+) as cofactor. L-topaquinone serves as cofactor. The cofactor is Mn(2+). Post-translationally, topaquinone (TPQ) is generated by copper-dependent autoxidation of a specific tyrosyl residue.

Its subcellular location is the periplasm. The enzyme catalyses a primary methyl amine + O2 + H2O = an aldehyde + H2O2 + NH4(+). The catalysed reaction is 2-phenylethylamine + O2 + H2O = 2-phenylacetaldehyde + H2O2 + NH4(+). It participates in amino-acid degradation; L-phenylalanine degradation; phenylacetate from L-phenylalanine: step 2/3. With respect to regulation, inhibited by 2-hydrazinopyridine. The enzyme prefers aromatic over aliphatic amines. This is Primary amine oxidase (tynA) from Escherichia coli (strain K12).